A 132-amino-acid chain; its full sequence is ATP synthase epsilon chain, chloroplastic (132 aa).

The protein belongs to the ATPase epsilon chain family. As to quaternary structure, F-type ATPases have 2 components, CF(1) - the catalytic core - and CF(0) - the membrane proton channel. CF(1) has five subunits: alpha(3), beta(3), gamma(1), delta(1), epsilon(1). CF(0) has three main subunits: a, b and c.

It localises to the plastid. The protein resides in the chloroplast thylakoid membrane. In terms of biological role, produces ATP from ADP in the presence of a proton gradient across the membrane. The polypeptide is ATP synthase epsilon chain, chloroplastic (Coffea arabica (Arabian coffee)).